The chain runs to 369 residues: MIKVVVVDDSAFMRKALSSMLEKDPGISVVATARNGEEGLEQIRKHDPDVVTLDIEMPRMDGLTALRHIMMEMPRPVLMVSSLTVEGAEATLKAMELGAVDFIPKQLSTVSLDIVKIEKDLQEKVKAISRRRVPGRSFRPAPAVRPAAPAALRATPRPSAAPSSAASSTGTLQVAGGKPVRDVVAIGVSTGGPPAVQKVLSRLPQDFPVGIVIAQHMPAAFTGPFAKRLDGVCAIAVKEAEDGEMLMPGKAYIAPGGKHVRVRNTRGRLTLEVSAEPAEALYKPSANELMESAGLALGRRSLGVILTGMGSDGLEGIKVLKQKGGHALAQSDSTCVVYGMPKAIVDAGLADSVVDIDDMAQAIMNAVYK.

The 118-residue stretch at 3–120 folds into the Response regulatory domain; that stretch reads KVVVVDDSAF…SLDIVKIEKD (118 aa). Asp-54 carries the 4-aspartylphosphate modification. A compositionally biased stretch (low complexity) spans 136–168; that stretch reads RSFRPAPAVRPAAPAALRATPRPSAAPSSAASS. Residues 136-174 are disordered; it reads RSFRPAPAVRPAAPAALRATPRPSAAPSSAASSTGTLQV. The CheB-type methylesterase domain maps to 177-369; it reads GKPVRDVVAI…AQAIMNAVYK (193 aa). Active-site residues include Ser-189, His-216, and Asp-312.

Belongs to the CheB family. Phosphorylated by CheA. Phosphorylation of the N-terminal regulatory domain activates the methylesterase activity.

It localises to the cytoplasm. It catalyses the reaction [protein]-L-glutamate 5-O-methyl ester + H2O = L-glutamyl-[protein] + methanol + H(+). The enzyme catalyses L-glutaminyl-[protein] + H2O = L-glutamyl-[protein] + NH4(+). In terms of biological role, involved in chemotaxis. Part of a chemotaxis signal transduction system that modulates chemotaxis in response to various stimuli. Catalyzes the demethylation of specific methylglutamate residues introduced into the chemoreceptors (methyl-accepting chemotaxis proteins or MCP) by CheR. Also mediates the irreversible deamidation of specific glutamine residues to glutamic acid. The protein is Protein-glutamate methylesterase/protein-glutamine glutaminase 1 of Oleidesulfovibrio alaskensis (strain ATCC BAA-1058 / DSM 17464 / G20) (Desulfovibrio alaskensis).